A 224-amino-acid polypeptide reads, in one-letter code: Transposase for insertion sequence element IS257 in transposon Tn4003 (224 aa).

Residues 33–52 (EILRGRGVNVHHSTVYRWVQ) constitute a DNA-binding region (H-T-H motif). The region spanning 73–222 (WRIDETYIKI…SPCHEISIML (150 aa)) is the Integrase catalytic domain.

Its function is as follows. Involved in the transposition of the insertion sequence. This Staphylococcus aureus protein is Transposase for insertion sequence element IS257 in transposon Tn4003.